We begin with the raw amino-acid sequence, 200 residues long: ATP-dependent Clp protease proteolytic subunit 2 (200 aa).

The active-site Nucleophile is the Ser-100.

Belongs to the peptidase S14 family. In terms of assembly, fourteen ClpP subunits assemble into 2 heptameric rings which stack back to back to give a disk-like structure with a central cavity, resembling the structure of eukaryotic proteasomes.

Its subcellular location is the cytoplasm. The enzyme catalyses Hydrolysis of proteins to small peptides in the presence of ATP and magnesium. alpha-casein is the usual test substrate. In the absence of ATP, only oligopeptides shorter than five residues are hydrolyzed (such as succinyl-Leu-Tyr-|-NHMec, and Leu-Tyr-Leu-|-Tyr-Trp, in which cleavage of the -Tyr-|-Leu- and -Tyr-|-Trp bonds also occurs).. In terms of biological role, cleaves peptides in various proteins in a process that requires ATP hydrolysis. Has a chymotrypsin-like activity. Plays a major role in the degradation of misfolded proteins. The polypeptide is ATP-dependent Clp protease proteolytic subunit 2 (Streptomyces avermitilis (strain ATCC 31267 / DSM 46492 / JCM 5070 / NBRC 14893 / NCIMB 12804 / NRRL 8165 / MA-4680)).